Reading from the N-terminus, the 457-residue chain is Oxygen-independent coproporphyrinogen III oxidase (457 aa).

The region spanning 47-279 (LKNPMPLSLY…EILESLISFL (233 aa)) is the Radical SAM core domain. S-adenosyl-L-methionine is bound at residue tyrosine 56. Residues cysteine 62 and cysteine 66 each contribute to the [4Fe-4S] cluster site. Phenylalanine 68 is a binding site for S-adenosyl-L-methionine. Cysteine 69 contributes to the [4Fe-4S] cluster binding site. S-adenosyl-L-methionine-binding positions include glycine 113, 114 to 115 (GT), glutamate 147, glutamine 174, arginine 186, aspartate 211, alanine 245, and isoleucine 331.

The protein belongs to the anaerobic coproporphyrinogen-III oxidase family. As to quaternary structure, monomer. It depends on [4Fe-4S] cluster as a cofactor.

It is found in the cytoplasm. The enzyme catalyses coproporphyrinogen III + 2 S-adenosyl-L-methionine = protoporphyrinogen IX + 2 5'-deoxyadenosine + 2 L-methionine + 2 CO2. It participates in porphyrin-containing compound metabolism; protoporphyrin-IX biosynthesis; protoporphyrinogen-IX from coproporphyrinogen-III (AdoMet route): step 1/1. In terms of biological role, involved in the heme biosynthesis. Catalyzes the anaerobic oxidative decarboxylation of propionate groups of rings A and B of coproporphyrinogen III to yield the vinyl groups in protoporphyrinogen IX. In Helicobacter pylori (strain ATCC 700392 / 26695) (Campylobacter pylori), this protein is Oxygen-independent coproporphyrinogen III oxidase (hemN).